The sequence spans 65 residues: Cecropin (65 aa).

The signal sequence occupies residues 1–23; it reads MNFVKVLFFISACILIMLSAVSG.

It belongs to the cecropin family.

It localises to the secreted. In terms of biological role, has antibacterial activity. This chain is Cecropin (LOC113514368), found in Galleria mellonella (Greater wax moth).